The chain runs to 230 residues: Large ribosomal subunit protein uL1 (230 aa).

Belongs to the universal ribosomal protein uL1 family. As to quaternary structure, part of the 50S ribosomal subunit.

In terms of biological role, binds directly to 23S rRNA. The L1 stalk is quite mobile in the ribosome, and is involved in E site tRNA release. Its function is as follows. Protein L1 is also a translational repressor protein, it controls the translation of the L11 operon by binding to its mRNA. In Acidithiobacillus ferrooxidans (strain ATCC 53993 / BNL-5-31) (Leptospirillum ferrooxidans (ATCC 53993)), this protein is Large ribosomal subunit protein uL1.